A 319-amino-acid chain; its full sequence is MKPENKLPVLDLISAEMKTVVNTLQPDLPPWPATGAIAEQRQYYTLERRFWNVGAPEMATRAYRVPTKYGQVKTRLFYPQPDSPATLFYLHGGGFILGNLDTHDRIMRLLASYSQCTVIGIDYTLSPEARFPQAIEEIVAACCYFHQQAEDYQINMSRIGFAGDSAGAMLALASALWLRDKQIDCGKVAGVLLWYGLYGLRDSVTRRLLGGVWDGLTQQDLQMYEEAYLSNDADRESPYYCLFNNDLTREVPPCFIAGAEFDPLLDDSCLLYQTLAAHQQPCEFKLYSGMLHAFLHYSRMMKTADEALRDGAQFFTAQL.

Residues 91–93 carry the Involved in the stabilization of the negatively charged intermediate by the formation of the oxyanion hole motif; it reads HGG. Residues Ser-165, Asp-262, and His-292 contribute to the active site.

The protein belongs to the 'GDXG' lipolytic enzyme family. Homodimer. Interacts with MalT and MelA.

Its subcellular location is the cytoplasm. In terms of biological role, displays esterase activity towards short chain fatty esters (acyl chain length of up to 8 carbons). Able to hydrolyze triacetylglycerol (triacetin) and tributyrylglycerol (tributyrin), but not trioleylglycerol (triolein) or cholesterol oleate. Negatively regulates MalT activity by antagonizing maltotriose binding. Inhibits MelA galactosidase activity. The chain is Acetyl esterase from Escherichia coli O45:K1 (strain S88 / ExPEC).